Reading from the N-terminus, the 213-residue chain is Heat shock protein 30C (213 aa).

The segment covering 61-80 (SKDTEMRRITDQNRQSRESE) has biased composition (basic and acidic residues). 2 disordered regions span residues 61-93 (SKDTEMRRITDQNRQSRESEGTSPNSGKDGKDH) and 174-213 (ALPPAPETPIPISMDTAPRDAQELPPDAQTSNAEGDQKVD). One can recognise a sHSP domain in the interval 76-188 (SRESEGTSPN…PETPIPISMD (113 aa)).

It belongs to the small heat shock protein (HSP20) family.

This chain is Heat shock protein 30C (hsp30c), found in Xenopus laevis (African clawed frog).